The chain runs to 125 residues: Ribonuclease P protein component (125 aa).

This sequence belongs to the RnpA family. As to quaternary structure, consists of a catalytic RNA component (M1 or rnpB) and a protein subunit.

It catalyses the reaction Endonucleolytic cleavage of RNA, removing 5'-extranucleotides from tRNA precursor.. In terms of biological role, RNaseP catalyzes the removal of the 5'-leader sequence from pre-tRNA to produce the mature 5'-terminus. It can also cleave other RNA substrates such as 4.5S RNA. The protein component plays an auxiliary but essential role in vivo by binding to the 5'-leader sequence and broadening the substrate specificity of the ribozyme. In Clostridium botulinum (strain Eklund 17B / Type B), this protein is Ribonuclease P protein component.